Reading from the N-terminus, the 353-residue chain is Photosystem II D2 protein (353 aa).

T2 is subject to N-acetylthreonine. Position 2 is a phosphothreonine (T2). A helical membrane pass occupies residues 41–61; the sequence is CAYFALGGWFTGTTFVTSWYT. H118 is a chlorophyll a binding site. Residues 125–141 traverse the membrane as a helical segment; sequence GFMLRQFELARSVQLRP. Residues Q130 and N143 each coordinate pheophytin a. A helical transmembrane segment spans residues 153–166; sequence VFVSVFLIYPLGQS. H198 is a binding site for chlorophyll a. Residues 208-228 form a helical membrane-spanning segment; the sequence is AALLCAIHGATVENTLFEDGD. A plastoquinone is bound by residues H215 and F262. H215 is a binding site for Fe cation. Position 269 (H269) interacts with Fe cation. A helical membrane pass occupies residues 279–295; it reads GLWMSALGVVGLALNLR.

The protein belongs to the reaction center PufL/M/PsbA/D family. In terms of assembly, PSII is composed of 1 copy each of membrane proteins PsbA, PsbB, PsbC, PsbD, PsbE, PsbF, PsbH, PsbI, PsbJ, PsbK, PsbL, PsbM, PsbT, PsbX, PsbY, PsbZ, Psb30/Ycf12, at least 3 peripheral proteins of the oxygen-evolving complex and a large number of cofactors. It forms dimeric complexes. The D1/D2 heterodimer binds P680, chlorophylls that are the primary electron donor of PSII, and subsequent electron acceptors. It shares a non-heme iron and each subunit binds pheophytin, quinone, additional chlorophylls, carotenoids and lipids. There is also a Cl(-1) ion associated with D1 and D2, which is required for oxygen evolution. The PSII complex binds additional chlorophylls, carotenoids and specific lipids. is required as a cofactor.

The protein resides in the plastid. Its subcellular location is the chloroplast thylakoid membrane. The enzyme catalyses 2 a plastoquinone + 4 hnu + 2 H2O = 2 a plastoquinol + O2. In terms of biological role, photosystem II (PSII) is a light-driven water:plastoquinone oxidoreductase that uses light energy to abstract electrons from H(2)O, generating O(2) and a proton gradient subsequently used for ATP formation. It consists of a core antenna complex that captures photons, and an electron transfer chain that converts photonic excitation into a charge separation. The D1/D2 (PsbA/PsbD) reaction center heterodimer binds P680, the primary electron donor of PSII as well as several subsequent electron acceptors. D2 is needed for assembly of a stable PSII complex. This Barbarea verna (Land cress) protein is Photosystem II D2 protein.